Consider the following 437-residue polypeptide: Gamma-glutamyl phosphate reductase (437 aa).

This sequence belongs to the gamma-glutamyl phosphate reductase family.

It is found in the cytoplasm. The enzyme catalyses L-glutamate 5-semialdehyde + phosphate + NADP(+) = L-glutamyl 5-phosphate + NADPH + H(+). Its pathway is amino-acid biosynthesis; L-proline biosynthesis; L-glutamate 5-semialdehyde from L-glutamate: step 2/2. In terms of biological role, catalyzes the NADPH-dependent reduction of L-glutamate 5-phosphate into L-glutamate 5-semialdehyde and phosphate. The product spontaneously undergoes cyclization to form 1-pyrroline-5-carboxylate. The polypeptide is Gamma-glutamyl phosphate reductase (Synechococcus sp. (strain CC9902)).